The chain runs to 376 residues: Anhydro-N-acetylmuramic acid kinase (376 aa).

Position 22-29 (22-29) interacts with ATP; that stretch reads GTSMDGAD.

Belongs to the anhydro-N-acetylmuramic acid kinase family.

The catalysed reaction is 1,6-anhydro-N-acetyl-beta-muramate + ATP + H2O = N-acetyl-D-muramate 6-phosphate + ADP + H(+). Its pathway is amino-sugar metabolism; 1,6-anhydro-N-acetylmuramate degradation. The protein operates within cell wall biogenesis; peptidoglycan recycling. In terms of biological role, catalyzes the specific phosphorylation of 1,6-anhydro-N-acetylmuramic acid (anhMurNAc) with the simultaneous cleavage of the 1,6-anhydro ring, generating MurNAc-6-P. Is required for the utilization of anhMurNAc either imported from the medium or derived from its own cell wall murein, and thus plays a role in cell wall recycling. The chain is Anhydro-N-acetylmuramic acid kinase from Neisseria gonorrhoeae (strain NCCP11945).